Consider the following 423-residue polypeptide: MDRGQPSLEPAAAAPRASGRCVIAPVRAVLRLRRRVCVLRKRRLLQPGGGPDVGTGAPRPGCSPRAPRADLDQPKFFTFDSPAELPSRTPRKKRRRSRLVLYPETSRKYRPRVEHRSRAQRCLLLLVAIVGFQVLNAIENLDDNAQRYDLDGLEKALQRAVFGQPAAVSRIVALMRDYLATHVHSRPLLLALHGPSGVGKSHVGRLLARHFRSVLEDSALVLQYHARHHCPEARAAQDCREELARRVADVVARAEAEEKTPLLVLDDVELMPRPLLDELHGFLQPQRSHHFHNAIYVLLSGAGGAEVTRFVLQNASRALPLRPDGFRSAEAAAAQAEEDLRASLLAVLSREHPLWQAAAIVPFLLLDKRDVVSCFRDEMAGEGFFPDQARAENLAAQLSFYRVAGREFAVTGCKQVVATVNLL.

The interval 47–68 (PGGGPDVGTGAPRPGCSPRAPR) is disordered. Phosphoserine occurs at positions 63 and 81. Phosphothreonine is present on threonine 89. A Phosphoserine modification is found at serine 106. The helical transmembrane segment at 122–138 (CLLLLVAIVGFQVLNAI) threads the bilayer. Residue 194–201 (GPSGVGKS) participates in ATP binding.

Belongs to the ClpA/ClpB family. Torsin subfamily.

Its subcellular location is the membrane. This Homo sapiens (Human) protein is Torsin-4A (TOR4A).